A 347-amino-acid chain; its full sequence is Phosphoribosylformylglycinamidine cyclo-ligase (347 aa).

The protein belongs to the AIR synthase family.

The protein localises to the cytoplasm. It carries out the reaction 2-formamido-N(1)-(5-O-phospho-beta-D-ribosyl)acetamidine + ATP = 5-amino-1-(5-phospho-beta-D-ribosyl)imidazole + ADP + phosphate + H(+). Its pathway is purine metabolism; IMP biosynthesis via de novo pathway; 5-amino-1-(5-phospho-D-ribosyl)imidazole from N(2)-formyl-N(1)-(5-phospho-D-ribosyl)glycinamide: step 2/2. The polypeptide is Phosphoribosylformylglycinamidine cyclo-ligase (Syntrophus aciditrophicus (strain SB)).